Reading from the N-terminus, the 360-residue chain is Phospho-N-acetylmuramoyl-pentapeptide-transferase (360 aa).

The next 11 helical transmembrane spans lie at 2–22, 26–46, 73–93, 97–117, 134–154, 168–188, 199–219, 236–256, 263–283, 288–308, and 339–359; these read LVWV…FQYL, AILG…VMIR, TMGG…WADL, YVLI…VDDW, YFWQ…TAHL, ITLA…VGGS, GLAI…AYLS, TGEL…FLWF, VFMG…VAVI, LVFF…ILQV, and IVRF…TLKI.

The protein belongs to the glycosyltransferase 4 family. MraY subfamily. Mg(2+) serves as cofactor.

The protein localises to the cell inner membrane. It catalyses the reaction UDP-N-acetyl-alpha-D-muramoyl-L-alanyl-gamma-D-glutamyl-meso-2,6-diaminopimeloyl-D-alanyl-D-alanine + di-trans,octa-cis-undecaprenyl phosphate = di-trans,octa-cis-undecaprenyl diphospho-N-acetyl-alpha-D-muramoyl-L-alanyl-D-glutamyl-meso-2,6-diaminopimeloyl-D-alanyl-D-alanine + UMP. Its pathway is cell wall biogenesis; peptidoglycan biosynthesis. In terms of biological role, catalyzes the initial step of the lipid cycle reactions in the biosynthesis of the cell wall peptidoglycan: transfers peptidoglycan precursor phospho-MurNAc-pentapeptide from UDP-MurNAc-pentapeptide onto the lipid carrier undecaprenyl phosphate, yielding undecaprenyl-pyrophosphoryl-MurNAc-pentapeptide, known as lipid I. This is Phospho-N-acetylmuramoyl-pentapeptide-transferase from Hahella chejuensis (strain KCTC 2396).